We begin with the raw amino-acid sequence, 427 residues long: Glutamate-1-semialdehyde 2,1-aminomutase (427 aa).

Residue lysine 265 is modified to N6-(pyridoxal phosphate)lysine.

Belongs to the class-III pyridoxal-phosphate-dependent aminotransferase family. HemL subfamily. As to quaternary structure, homodimer. It depends on pyridoxal 5'-phosphate as a cofactor.

It localises to the cytoplasm. It carries out the reaction (S)-4-amino-5-oxopentanoate = 5-aminolevulinate. The protein operates within porphyrin-containing compound metabolism; protoporphyrin-IX biosynthesis; 5-aminolevulinate from L-glutamyl-tRNA(Glu): step 2/2. In Bordetella petrii (strain ATCC BAA-461 / DSM 12804 / CCUG 43448), this protein is Glutamate-1-semialdehyde 2,1-aminomutase.